Here is a 65-residue protein sequence, read N- to C-terminus: Weak neurotoxin 6 (65 aa).

5 cysteine pairs are disulfide-bonded: C3-C24, C6-C11, C17-C42, C46-C57, and C58-C63.

This sequence belongs to the three-finger toxin family. Ancestral subfamily. Orphan group II sub-subfamily. In terms of tissue distribution, expressed by the venom gland.

Its subcellular location is the secreted. In terms of biological role, binds with low affinity to muscular (alpha-1-beta-1-delta-epsilon/CHRNA1-CHRNB1-CHRND-CHRNE) and very low affinity to neuronal (alpha-7/CHRNA7) nicotinic acetylcholine receptor (nAChR). The chain is Weak neurotoxin 6 from Naja naja (Indian cobra).